A 393-amino-acid chain; its full sequence is Formate-dependent phosphoribosylglycinamide formyltransferase (393 aa).

Residues 22–23 (EL) and glutamate 82 contribute to the N(1)-(5-phospho-beta-D-ribosyl)glycinamide site. ATP is bound by residues arginine 114, lysine 155, 160–165 (SSGKGQ), 195–198 (EGFI), and glutamate 203. In terms of domain architecture, ATP-grasp spans 119-308 (RLAAEELDLP…QFALHARAIL (190 aa)). Glutamate 267 and glutamate 279 together coordinate Mg(2+). N(1)-(5-phospho-beta-D-ribosyl)glycinamide contacts are provided by residues aspartate 286, lysine 356, and 363–364 (RR).

This sequence belongs to the PurK/PurT family. In terms of assembly, homodimer.

The enzyme catalyses N(1)-(5-phospho-beta-D-ribosyl)glycinamide + formate + ATP = N(2)-formyl-N(1)-(5-phospho-beta-D-ribosyl)glycinamide + ADP + phosphate + H(+). It functions in the pathway purine metabolism; IMP biosynthesis via de novo pathway; N(2)-formyl-N(1)-(5-phospho-D-ribosyl)glycinamide from N(1)-(5-phospho-D-ribosyl)glycinamide (formate route): step 1/1. Functionally, involved in the de novo purine biosynthesis. Catalyzes the transfer of formate to 5-phospho-ribosyl-glycinamide (GAR), producing 5-phospho-ribosyl-N-formylglycinamide (FGAR). Formate is provided by PurU via hydrolysis of 10-formyl-tetrahydrofolate. In Pseudomonas fluorescens (strain Pf0-1), this protein is Formate-dependent phosphoribosylglycinamide formyltransferase.